The chain runs to 153 residues: Arachidonate 5-lipoxygenase-activating protein (153 aa).

Over 1-8 the chain is Lumenal; it reads MDQETVGN. The chain crosses the membrane as a helical span at residues 9-30; the sequence is VVLLAIVTLISVIQNGFFAHKV. Over 31-52 the chain is Cytoplasmic; that stretch reads EHESKTQNGRSFQRTGTLAFER. The helical transmembrane segment at 53–77 threads the bilayer; the sequence is VYTANQNCVDAYPTFLVMLWSAGLL. The Lumenal portion of the chain corresponds to 78 to 80; the sequence is CSQ. Residues 81–102 traverse the membrane as a helical segment; it reads VPAAFAGLMYLFVRQKYFVGYL. The Cytoplasmic portion of the chain corresponds to 103 to 107; sequence GERRQ. Residues 108 to 115 lie within the membrane without spanning it; it reads STPGYIFG. The chain crosses the membrane as a helical span at residues 116–128; that stretch reads KRIILFLFLMSLA. The Lumenal segment spans residues 129 to 153; sequence GIFNYYLILFFGSDFENYIKTITTT.

Belongs to the MAPEG family. In terms of assembly, homotrimer. Interacts with LTC4S and ALOX5.

Its subcellular location is the nucleus membrane. The protein localises to the endoplasmic reticulum membrane. Functionally, required for leukotriene biosynthesis by ALOX5 (5-lipoxygenase). Anchors ALOX5 to the membrane. Binds arachidonic acid, and could play an essential role in the transfer of arachidonic acid to ALOX5. Binds to MK-886, a compound that blocks the biosynthesis of leukotrienes. This is Arachidonate 5-lipoxygenase-activating protein (ALOX5AP) from Equus caballus (Horse).